Consider the following 738-residue polypeptide: Melanotransferrin (738 aa).

A signal peptide spans 1 to 19; that stretch reads MRGPSGALWLLLALRTVLG. The interval 20 to 30 is antigenic epitope; it reads GMEVRWCATSD. Transferrin-like domains lie at 23–357 and 366–706; these read VRWC…GLLC and LRWC…GMSS. Disulfide bonds link C26/C63 and C36/C54. N38 is a glycosylation site (N-linked (GlcNAc...) asparagine). Residues D78 and Y107 each coordinate Fe(3+). 4 disulfide bridges follow: C130–C216, C172–C189, C186–C199, and C257–C271. Residue T132 coordinates hydrogencarbonate. An N-linked (GlcNAc...) asparagine glycan is attached at N135. 3 residues coordinate hydrogencarbonate: R136, V138, and G139. Residue Y210 coordinates Fe(3+). H279, S421, and Y451 together coordinate Fe(3+). Position 462 is a phosphoserine; by FAM20C (S462). N-linked (GlcNAc...) asparagine glycosylation is present at N515. 2 residues coordinate Fe(3+): Y556 and H625. C709 carries the GPI-anchor amidated cysteine lipid modification. Residues 710–738 constitute a propeptide, removed in mature form; sequence SGAAAPAPGAPLLPLLLPALAARLLPPAL.

It belongs to the transferrin family. Found predominantly in human melanomas and in certain fetal tissues; also found in liver, epithelium, umbilical chord, placenta and sweat gland ducts.

The protein localises to the cell membrane. Functionally, involved in iron cellular uptake. Seems to be internalized and then recycled back to the cell membrane. Binds a single atom of iron per subunit. Could also bind zinc. This chain is Melanotransferrin, found in Homo sapiens (Human).